The primary structure comprises 500 residues: Enolase (500 aa).

Substrate is bound by residues His225 and Glu234. Glu277 acts as the Proton donor in catalysis. Residues Asp312, Glu361, and Asp386 each coordinate Mg(2+). 2 residues coordinate substrate: Glu361 and Asp386. The Proton acceptor role is filled by Lys411. Residues 438–441 and Lys462 each bind substrate; that span reads SHRS.

It belongs to the enolase family. Homodimer. It depends on Mg(2+) as a cofactor.

Its subcellular location is the cytoplasm. It carries out the reaction (2R)-2-phosphoglycerate = phosphoenolpyruvate + H2O. The protein operates within carbohydrate degradation; glycolysis; pyruvate from D-glyceraldehyde 3-phosphate: step 4/5. Functionally, enzyme of the glycolytic pathway. Glycolysis is essential in glial cells but not in neurons; neurons rely on the citric acid cycle for their energy needs, and on lactate and alanine secreted into the hemolymph by glial cells to fuel it. In Drosophila melanogaster (Fruit fly), this protein is Enolase.